The sequence spans 216 residues: Pyridoxine/pyridoxamine 5'-phosphate oxidase (216 aa).

FMN contacts are provided by residues 63–68 (RMVLMK), 78–79 (YS), lysine 85, and glutamine 107. Lysine 68 is a substrate binding site. Residues tyrosine 125 and arginine 129 each coordinate substrate. FMN contacts are provided by residues 142–143 (QS) and tryptophan 187. 193 to 195 (RLH) contributes to the substrate binding site. Arginine 197 provides a ligand contact to FMN.

Belongs to the pyridoxamine 5'-phosphate oxidase family. In terms of assembly, homodimer. Requires FMN as cofactor.

The catalysed reaction is pyridoxamine 5'-phosphate + O2 + H2O = pyridoxal 5'-phosphate + H2O2 + NH4(+). The enzyme catalyses pyridoxine 5'-phosphate + O2 = pyridoxal 5'-phosphate + H2O2. It participates in cofactor metabolism; pyridoxal 5'-phosphate salvage; pyridoxal 5'-phosphate from pyridoxamine 5'-phosphate: step 1/1. Its pathway is cofactor metabolism; pyridoxal 5'-phosphate salvage; pyridoxal 5'-phosphate from pyridoxine 5'-phosphate: step 1/1. Catalyzes the oxidation of either pyridoxine 5'-phosphate (PNP) or pyridoxamine 5'-phosphate (PMP) into pyridoxal 5'-phosphate (PLP). The sequence is that of Pyridoxine/pyridoxamine 5'-phosphate oxidase from Bradyrhizobium sp. (strain ORS 278).